Reading from the N-terminus, the 90-residue chain is RNA-binding protein Hfq (90 aa).

A Sm domain is found at 9–68 (DPFLNALRRERVPVSIYLVNGIKLQGQVESFDQFVILLKNTVSQMVYKHAISTVVPARPF). The disordered stretch occupies residues 71 to 90 (TGHQNAQGGYGPQDDVPSGE).

This sequence belongs to the Hfq family. As to quaternary structure, homohexamer.

Functionally, RNA chaperone that binds small regulatory RNA (sRNAs) and mRNAs to facilitate mRNA translational regulation in response to envelope stress, environmental stress and changes in metabolite concentrations. Also binds with high specificity to tRNAs. The sequence is that of RNA-binding protein Hfq from Shewanella putrefaciens (strain CN-32 / ATCC BAA-453).